The chain runs to 359 residues: Phospho-N-acetylmuramoyl-pentapeptide-transferase (359 aa).

10 helical membrane-spanning segments follow: residues 3-23, 55-75, 80-100, 117-137, 156-176, 187-207, 231-251, 255-275, 280-300, and 334-354; these read QILV…PALI, VAIV…GLAF, VSAS…VGFL, TAKT…VLQF, IATV…IVSA, LDGL…LITF, LTLI…WNAA, IFMG…LSVT, ILAV…VLQI, and FWLL…GEWL.

Belongs to the glycosyltransferase 4 family. MraY subfamily. Mg(2+) serves as cofactor.

It is found in the cell membrane. The catalysed reaction is UDP-N-acetyl-alpha-D-muramoyl-L-alanyl-gamma-D-glutamyl-meso-2,6-diaminopimeloyl-D-alanyl-D-alanine + di-trans,octa-cis-undecaprenyl phosphate = di-trans,octa-cis-undecaprenyl diphospho-N-acetyl-alpha-D-muramoyl-L-alanyl-D-glutamyl-meso-2,6-diaminopimeloyl-D-alanyl-D-alanine + UMP. It participates in cell wall biogenesis; peptidoglycan biosynthesis. Functionally, catalyzes the initial step of the lipid cycle reactions in the biosynthesis of the cell wall peptidoglycan: transfers peptidoglycan precursor phospho-MurNAc-pentapeptide from UDP-MurNAc-pentapeptide onto the lipid carrier undecaprenyl phosphate, yielding undecaprenyl-pyrophosphoryl-MurNAc-pentapeptide, known as lipid I. This is Phospho-N-acetylmuramoyl-pentapeptide-transferase from Mycobacterium leprae (strain TN).